A 95-amino-acid polypeptide reads, in one-letter code: MAQIVKATEAVRSFSDIINRVYYKGESFDIQKGNNIVAQITPVENKSSVKVKNLDELFKNGPHLDPEDAEQFMKDVDDVRRSTRINIEELYRKWD.

Antitoxin component of a type II toxin-antitoxin (TA) system. Partially neutralizes the RNase activity of cognate toxin VapC. This chain is Antitoxin VapB, found in Rickettsia bellii (strain RML369-C).